Consider the following 176-residue polypeptide: Small ribosomal subunit protein uS5 (176 aa).

The 64-residue stretch at 11–74 folds into the S5 DRBM domain; sequence LSEVLVDVNR…QAAKKRMMKV (64 aa).

This sequence belongs to the universal ribosomal protein uS5 family. In terms of assembly, part of the 30S ribosomal subunit. Contacts proteins S4 and S8.

With S4 and S12 plays an important role in translational accuracy. Functionally, located at the back of the 30S subunit body where it stabilizes the conformation of the head with respect to the body. The protein is Small ribosomal subunit protein uS5 of Rickettsia peacockii (strain Rustic).